We begin with the raw amino-acid sequence, 161 residues long: Endoribonuclease YbeY (161 aa).

Positions 120, 124, and 130 each coordinate Zn(2+).

This sequence belongs to the endoribonuclease YbeY family. Zn(2+) serves as cofactor.

Its subcellular location is the cytoplasm. Its function is as follows. Single strand-specific metallo-endoribonuclease involved in late-stage 70S ribosome quality control and in maturation of the 3' terminus of the 16S rRNA. This Chlamydia trachomatis serovar A (strain ATCC VR-571B / DSM 19440 / HAR-13) protein is Endoribonuclease YbeY.